Consider the following 450-residue polypeptide: Tol-Pal system protein TolB (450 aa).

Positions 1-37 are cleaved as a signal peptide; that stretch reads MIERNGLQRMPFRLNRRHMISGMASAAVLLGSRQALG.

Belongs to the TolB family. The Tol-Pal system is composed of five core proteins: the inner membrane proteins TolA, TolQ and TolR, the periplasmic protein TolB and the outer membrane protein Pal. They form a network linking the inner and outer membranes and the peptidoglycan layer.

The protein localises to the periplasm. Functionally, part of the Tol-Pal system, which plays a role in outer membrane invagination during cell division and is important for maintaining outer membrane integrity. The chain is Tol-Pal system protein TolB from Nitrobacter winogradskyi (strain ATCC 25391 / DSM 10237 / CIP 104748 / NCIMB 11846 / Nb-255).